The following is a 260-amino-acid chain: Snake venom serine protease salmobin (260 aa).

A signal peptide spans Met1–Ala18. Positions Gln19 to Leu24 are excised as a propeptide. A Peptidase S1 domain is found at Val25–Ala251. 6 cysteine pairs are disulfide-bonded: Cys31–Cys165, Cys52–Cys68, Cys102–Cys258, Cys144–Cys212, Cys176–Cys191, and Cys202–Cys227. His67 functions as the Charge relay system in the catalytic mechanism. N-linked (GlcNAc...) asparagine glycosylation is present at Asn105. Asp112 (charge relay system) is an active-site residue. 2 N-linked (GlcNAc...) asparagine glycosylation sites follow: Asn123 and Asn156. Residue Ser206 is the Charge relay system of the active site.

The protein belongs to the peptidase S1 family. Snake venom subfamily. As to quaternary structure, monomer. Expressed by the venom gland.

The protein resides in the secreted. Functionally, snake venom serine protease that may act in the hemostasis system of the prey. The polypeptide is Snake venom serine protease salmobin (Gloydius halys (Chinese water mocassin)).